The following is a 98-amino-acid chain: Large ribosomal subunit protein mL53 (98 aa).

This sequence belongs to the mitochondrion-specific ribosomal protein mL53 family. In terms of assembly, component of the mitochondrial large ribosomal subunit (mt-LSU). Mature N.crassa 74S mitochondrial ribosomes consist of a small (37S) and a large (54S) subunit. The 37S small subunit contains a 16S ribosomal RNA (16S mt-rRNA) and 32 different proteins. The 54S large subunit contains a 23S rRNA (23S mt-rRNA) and 42 different proteins.

Its subcellular location is the mitochondrion. Component of the mitochondrial ribosome (mitoribosome), a dedicated translation machinery responsible for the synthesis of mitochondrial genome-encoded proteins, including at least some of the essential transmembrane subunits of the mitochondrial respiratory chain. The mitoribosomes are attached to the mitochondrial inner membrane and translation products are cotranslationally integrated into the membrane. The protein is Large ribosomal subunit protein mL53 (mrpl44) of Neurospora crassa (strain ATCC 24698 / 74-OR23-1A / CBS 708.71 / DSM 1257 / FGSC 987).